A 1392-amino-acid chain; its full sequence is DNA-directed RNA polymerase subunit beta'' (1392 aa).

The Zn(2+) site is built by C224, C295, C302, and C305.

The protein belongs to the RNA polymerase beta' chain family. RpoC2 subfamily. In plastids the minimal PEP RNA polymerase catalytic core is composed of four subunits: alpha, beta, beta', and beta''. When a (nuclear-encoded) sigma factor is associated with the core the holoenzyme is formed, which can initiate transcription. The cofactor is Zn(2+).

It is found in the plastid. It localises to the chloroplast. The catalysed reaction is RNA(n) + a ribonucleoside 5'-triphosphate = RNA(n+1) + diphosphate. DNA-dependent RNA polymerase catalyzes the transcription of DNA into RNA using the four ribonucleoside triphosphates as substrates. In Solanum bulbocastanum (Wild potato), this protein is DNA-directed RNA polymerase subunit beta''.